A 137-amino-acid polypeptide reads, in one-letter code: MIWKRHLSLEELNATSSSTLVAHLGIVYTRLGDDTLEAEMPVDNRTHQPFGLLHGGASAALAETLGSMAGYLMTRDGQCVVGTELNATHHRAVSQGRVRGVCQPLHLGRQSQSWEIVVFDEQGRRCCTCRLSTMVLG.

Glu-63 acts as the Nucleophile or proton acceptor in catalysis.

The protein belongs to the thioesterase PaaI family. In terms of assembly, homotetramer. Dimer of dimers. Interacts specifically with the aryl carrier protein (ArCP) domain of EntB.

It localises to the cytoplasm. The protein operates within siderophore biosynthesis; enterobactin biosynthesis. Its function is as follows. Required for optimal enterobactin synthesis. Acts as a proofreading enzyme that prevents EntB misacylation by hydrolyzing the thioester bound existing between EntB and wrongly charged molecules. This chain is Proofreading thioesterase EntH, found in Enterobacter lignolyticus (strain SCF1).